We begin with the raw amino-acid sequence, 74 residues long: Conotoxin AbVIL (74 aa).

The N-terminal stretch at 1–17 (VLIIAVLFLTACQLTTA) is a signal peptide. The interval 17 to 41 (AETSSRGEQKHRAPRSTDKNSRMTK) is disordered. Residues 18 to 40 (ETSSRGEQKHRAPRSTDKNSRMT) constitute a propeptide that is removed on maturation. A compositionally biased stretch (basic and acidic residues) spans 21–37 (SRGEQKHRAPRSTDKNS). 3 disulfide bridges follow: C43/C57, C50/C61, and C56/C68.

It belongs to the conotoxin O1 superfamily. Expressed by the venom duct.

The protein resides in the secreted. In Conus abbreviatus (Abbreviated cone), this protein is Conotoxin AbVIL.